The following is a 306-amino-acid chain: Porphobilinogen deaminase (306 aa).

Cysteine 239 bears the S-(dipyrrolylmethanemethyl)cysteine mark.

It belongs to the HMBS family. Monomer. Requires dipyrromethane as cofactor.

The enzyme catalyses 4 porphobilinogen + H2O = hydroxymethylbilane + 4 NH4(+). It functions in the pathway porphyrin-containing compound metabolism; protoporphyrin-IX biosynthesis; coproporphyrinogen-III from 5-aminolevulinate: step 2/4. Tetrapolymerization of the monopyrrole PBG into the hydroxymethylbilane pre-uroporphyrinogen in several discrete steps. In Helicobacter pylori (strain HPAG1), this protein is Porphobilinogen deaminase.